Consider the following 615-residue polypeptide: Putative DNA ligase 205R (615 aa).

Lysine 101 acts as the N6-AMP-lysine intermediate in catalysis.

This sequence belongs to the NAD-dependent DNA ligase family.

The catalysed reaction is NAD(+) + (deoxyribonucleotide)n-3'-hydroxyl + 5'-phospho-(deoxyribonucleotide)m = (deoxyribonucleotide)n+m + AMP + beta-nicotinamide D-nucleotide.. Catalyzes the formation of phosphodiester linkages between 5'-phosphoryl and 3'-hydroxyl groups in double-stranded DNA using NAD as a coenzyme and as the energy source for the reaction. The polypeptide is Putative DNA ligase 205R (Invertebrate iridescent virus 6 (IIV-6)).